The primary structure comprises 444 residues: Adenylosuccinate lyase (444 aa).

N(6)-(1,2-dicarboxyethyl)-AMP is bound by residues 9–10 (RY), 73–75 (KHD), and 97–98 (TS). Histidine 145 functions as the Proton donor/acceptor in the catalytic mechanism. N(6)-(1,2-dicarboxyethyl)-AMP is bound at residue glutamine 219. The active-site Proton donor/acceptor is the serine 269. Residues serine 270, 275 to 277 (KRN), asparagine 283, and 314 to 318 (SAERI) each bind N(6)-(1,2-dicarboxyethyl)-AMP.

This sequence belongs to the lyase 1 family. Adenylosuccinate lyase subfamily. Homotetramer. Residues from neighboring subunits contribute catalytic and substrate-binding residues to each active site.

It carries out the reaction N(6)-(1,2-dicarboxyethyl)-AMP = fumarate + AMP. The catalysed reaction is (2S)-2-[5-amino-1-(5-phospho-beta-D-ribosyl)imidazole-4-carboxamido]succinate = 5-amino-1-(5-phospho-beta-D-ribosyl)imidazole-4-carboxamide + fumarate. It functions in the pathway purine metabolism; AMP biosynthesis via de novo pathway; AMP from IMP: step 2/2. Its pathway is purine metabolism; IMP biosynthesis via de novo pathway; 5-amino-1-(5-phospho-D-ribosyl)imidazole-4-carboxamide from 5-amino-1-(5-phospho-D-ribosyl)imidazole-4-carboxylate: step 2/2. In terms of biological role, catalyzes two reactions in de novo purine nucleotide biosynthesis. Catalyzes the breakdown of 5-aminoimidazole- (N-succinylocarboxamide) ribotide (SAICAR or 2-[5-amino-1-(5-phospho-beta-D-ribosyl)imidazole-4-carboxamido]succinate) to 5-aminoimidazole-4-carboxamide ribotide (AICAR or 5-amino-1-(5-phospho-beta-D-ribosyl)imidazole-4-carboxamide) and fumarate, and of adenylosuccinate (ADS or N(6)-(1,2-dicarboxyethyl)-AMP) to adenosine monophosphate (AMP) and fumarate. This chain is Adenylosuccinate lyase (purB), found in Archaeoglobus fulgidus (strain ATCC 49558 / DSM 4304 / JCM 9628 / NBRC 100126 / VC-16).